A 710-amino-acid polypeptide reads, in one-letter code: Interferon-induced GTP-binding protein Mx2 (710 aa).

The tract at residues 1-51 (MSMSFRPLKYKRHTQTSTQHHPKQDIYFHQQPPGPPLGQTMSPPQWQVEES) is disordered. Residues 39–50 (QTMSPPQWQVEE) are compositionally biased toward polar residues. The Dynamin-type G domain occupies 112–383 (DLALPAIAVI…LIWHINKSLP (272 aa)). The G1 motif stretch occupies residues 122 to 129 (GDQSSGKS). 122 to 129 (GDQSSGKS) is a GTP binding site. The interval 147 to 149 (ITR) is G2 motif. The G3 motif stretch occupies residues 221 to 224 (DLPG). GTP is bound by residues 221–225 (DLPGI) and 290–293 (TKPD). The tract at residues 290-293 (TKPD) is G4 motif. The G5 motif stretch occupies residues 322 to 325 (KCRG). Positions 619 to 710 (IVEIGVHLNA…ALYEFPHFKG (92 aa)) constitute a GED domain.

Belongs to the TRAFAC class dynamin-like GTPase superfamily. Dynamin/Fzo/YdjA family.

It is found in the cytoplasm. The protein resides in the nucleus. Functionally, interferon-induced dynamin-like GTPase with antiviral activity against vesicular stomatitis virus (VSV). This chain is Interferon-induced GTP-binding protein Mx2 (MX2), found in Bos taurus (Bovine).